The sequence spans 157 residues: ATP synthase subunit b (157 aa).

A helical membrane pass occupies residues 7 to 27 (LIAQLVVFFILAWFTMKFVWP).

Belongs to the ATPase B chain family. F-type ATPases have 2 components, F(1) - the catalytic core - and F(0) - the membrane proton channel. F(1) has five subunits: alpha(3), beta(3), gamma(1), delta(1), epsilon(1). F(0) has three main subunits: a(1), b(2) and c(10-14). The alpha and beta chains form an alternating ring which encloses part of the gamma chain. F(1) is attached to F(0) by a central stalk formed by the gamma and epsilon chains, while a peripheral stalk is formed by the delta and b chains.

It is found in the cell inner membrane. F(1)F(0) ATP synthase produces ATP from ADP in the presence of a proton or sodium gradient. F-type ATPases consist of two structural domains, F(1) containing the extramembraneous catalytic core and F(0) containing the membrane proton channel, linked together by a central stalk and a peripheral stalk. During catalysis, ATP synthesis in the catalytic domain of F(1) is coupled via a rotary mechanism of the central stalk subunits to proton translocation. In terms of biological role, component of the F(0) channel, it forms part of the peripheral stalk, linking F(1) to F(0). This chain is ATP synthase subunit b, found in Azoarcus sp. (strain BH72).